Consider the following 660-residue polypeptide: Anoctamin-10 (660 aa).

The Cytoplasmic portion of the chain corresponds to 1–207 (MKVTLSALDT…DSIRGYFGET (207 aa)). Residues 208-228 (IALYFGFLEYFTFALIPMAVI) traverse the membrane as a helical segment. The Extracellular portion of the chain corresponds to 229 to 240 (GLPYYLFVWEDY). Residues 241–261 (DKYVIFASFNLIWSTVILELW) form a helical membrane-spanning segment. At 262 to 316 (KRGCANMTYRWGTLLMKRKFEEPRPGFHGVLGINSITGKEEPLYPSYKRQLRIYL) the chain is on the cytoplasmic side. A helical transmembrane segment spans residues 317–337 (VSLPFVCLCLYFSLYVMMIYF). Residues 338 to 352 (DMEVWALGLHENSGS) are Extracellular-facing. Residues 353–373 (EWTSVLLYVPSIIYAIVIEIM) traverse the membrane as a helical segment. Over 374 to 400 (NRLYRYAAEFLTSWENHRLESAYQNHL) the chain is Cytoplasmic. A helical membrane pass occupies residues 401-421 (ILKVLVFNFLNCFASLFYIAF). The Extracellular portion of the chain corresponds to 422–500 (VLKDMKLLRQ…YLGTFDDYLE (79 aa)). The chain crosses the membrane as a helical span at residues 501–521 (LFLQFGYVSLFSCVYPLAAAF). Residues 522-553 (AVLNNFTEVNSDALKMCRVFKRPFSEPSANIG) are Cytoplasmic-facing. The helical transmembrane segment at 554 to 574 (VWQLAFETMSVISVVTNCALI) threads the bilayer. Residues 575–590 (GMSPQVNAVFPESKAD) lie on the Extracellular side of the membrane. A helical membrane pass occupies residues 591–611 (LILIVVAVEHALLALKFILAF). Over 612-660 (AIPDKPRHIQMKLARLEFESLEALKQQQMKLVTENLKEEPMESGKEKAT) the chain is Cytoplasmic.

It belongs to the anoctamin family. In terms of tissue distribution, highly expressed in the brain. Intermediate levels in the retina and heart and low levels in the placenta, liver, lung, duodenum, kidney, testis and spleen. In brain areas, highest expression in the frontal and occipital cortices and in the cerebellum. Lower expression in the fetal brain than in the adult brain.

It localises to the cell membrane. In terms of biological role, does not exhibit calcium-activated chloride channel (CaCC) activity. Can inhibit the activity of ANO1. The chain is Anoctamin-10 (ANO10) from Homo sapiens (Human).